The following is a 60-amino-acid chain: Metallothionein (60 aa).

The interval 1-28 (MDPCDCAKTGTCNCGTSCTCANCSCTKC) is beta. Residues C4, C6, C12, C14, C18, C20, C23, C25, C28, C32, C33, C35, C36, C40, C43, C47, C49, C54, C58, and C59 each coordinate a divalent metal cation. The alpha stretch occupies residues 29 to 60 (KKSCCECCPSGCSKCASGCACKDKTCDTNCCQ).

It belongs to the metallothionein superfamily. Type 1 family.

Functionally, metallothioneins have a high content of cysteine residues that bind various heavy metals. The chain is Metallothionein (mt) from Gadus morhua (Atlantic cod).